We begin with the raw amino-acid sequence, 147 residues long: Hemoglobin subunit beta (147 aa).

Residue Val2 is modified to N-acetylvaline. The 145-residue stretch at 3–147 (HLTGDEKAAV…VANALAHKYH (145 aa)) folds into the Globin domain. Thr13 carries the post-translational modification Phosphothreonine. A Phosphoserine modification is found at Ser45. Lys60 is subject to N6-acetyllysine. Heme b is bound at residue His64. The residue at position 83 (Lys83) is an N6-acetyllysine. His93 is a heme b binding site. Position 94 is an S-nitrosocysteine (Cys94). Residue Lys145 is modified to N6-acetyllysine.

It belongs to the globin family. In terms of assembly, heterotetramer of two alpha chains and two beta chains. As to expression, red blood cells.

Involved in oxygen transport from the lung to the various peripheral tissues. This Alouatta belzebul (Red-handed howler monkey) protein is Hemoglobin subunit beta (HBB).